The chain runs to 77 residues: Sec-independent protein translocase protein TatA (77 aa).

Residues 1–21 (MGSLSIWHWIVVIAVVLLLFG) form a helical membrane-spanning segment. Residues 43–60 (MQDDDKAPEKTEPVKSID) show a composition bias toward basic and acidic residues. Positions 43–77 (MQDDDKAPEKTEPVKSIDHGATPSATRTDVGSKAV) are disordered.

This sequence belongs to the TatA/E family. The Tat system comprises two distinct complexes: a TatABC complex, containing multiple copies of TatA, TatB and TatC subunits, and a separate TatA complex, containing only TatA subunits. Substrates initially bind to the TatABC complex, which probably triggers association of the separate TatA complex to form the active translocon.

The protein localises to the cell inner membrane. In terms of biological role, part of the twin-arginine translocation (Tat) system that transports large folded proteins containing a characteristic twin-arginine motif in their signal peptide across membranes. TatA could form the protein-conducting channel of the Tat system. This chain is Sec-independent protein translocase protein TatA, found in Bradyrhizobium sp. (strain BTAi1 / ATCC BAA-1182).